The following is a 733-amino-acid chain: Leucine-rich repeat neuronal protein 4 (733 aa).

The N-terminal stretch at 1-19 (MRWTLMLQLLQLLLQLLMA) is a signal peptide. The Extracellular segment spans residues 20–676 (QSQSLERISQ…CATFTTKPSS (657 aa)). LRR repeat units lie at residues 62–82 (GVTT…CLPR), 83–106 (TLRS…GRLP), 107–128 (ELRV…RDTL), 130–151 (ELRE…AGPS), 154–175 (SLRS…TFAC), 178–199 (ALRL…AFAG), 207–230 (ALEL…RNLP), 231–253 (KLKS…IFKM), 256–278 (NLRQ…IFQD), and 281–302 (NLQV…NSSQ). An N-linked (GlcNAc...) asparagine glycan is attached at Asn70. Asn183 carries an N-linked (GlcNAc...) asparagine glycan. Asn291, Asn299, Asn327, Asn408, and Asn469 each carry an N-linked (GlcNAc...) asparagine glycan. The LRRCT domain occupies 311-364 (NPLICSCELAWLLVDVNKTVLHRAADTMCEPALGSTGPFSGPLSLSHLSNVCRS). The interval 395–423 (STALSAQPGGSQQNITKVPSLTMTSPTQG) is disordered. Residues 480-518 (KYLEPLPTSPNPRSLPQTKQRTQATPRALHTDPPQDEIP) form a disordered region. The segment covering 490-504 (NPRSLPQTKQRTQAT) has biased composition (polar residues). Residues 576–675 (TPDPPTLQGV…SCATFTTKPS (100 aa)) form the Fibronectin type-III domain. N-linked (GlcNAc...) asparagine glycosylation occurs at Asn619. The chain crosses the membrane as a helical span at residues 677–697 (VVIFWGLCTASGLLLVSTLVL). Residues 698-733 (SVCLWRQRWKPHRQFYDTHLVAFKNPARAEEVTQWE) are Cytoplasmic-facing.

It localises to the membrane. May play an important role in hippocampus-dependent long-lasting memory. The polypeptide is Leucine-rich repeat neuronal protein 4 (Lrrn4) (Mus musculus (Mouse)).